We begin with the raw amino-acid sequence, 731 residues long: 1,4-alpha-glucan branching enzyme GlgB (731 aa).

The active-site Nucleophile is the D408. E461 (proton donor) is an active-site residue.

This sequence belongs to the glycosyl hydrolase 13 family. GlgB subfamily. As to quaternary structure, monomer.

It catalyses the reaction Transfers a segment of a (1-&gt;4)-alpha-D-glucan chain to a primary hydroxy group in a similar glucan chain.. It functions in the pathway glycan biosynthesis; glycogen biosynthesis. Functionally, catalyzes the formation of the alpha-1,6-glucosidic linkages in glycogen by scission of a 1,4-alpha-linked oligosaccharide from growing alpha-1,4-glucan chains and the subsequent attachment of the oligosaccharide to the alpha-1,6 position. The sequence is that of 1,4-alpha-glucan branching enzyme GlgB from Corynebacterium glutamicum (strain ATCC 13032 / DSM 20300 / JCM 1318 / BCRC 11384 / CCUG 27702 / LMG 3730 / NBRC 12168 / NCIMB 10025 / NRRL B-2784 / 534).